The primary structure comprises 500 residues: FAD-linked oxidoreductase chyH (500 aa).

The first 20 residues, 1 to 20 (MRLQAVTAVAAWAVASACQS), serve as a signal peptide directing secretion. Residues 65–235 (LEVPTVNIVI…TSVTSKTYDI (171 aa)) form the FAD-binding PCMH-type domain. Residues asparagine 199, asparagine 266, asparagine 275, and asparagine 383 are each glycosylated (N-linked (GlcNAc...) asparagine).

It belongs to the oxygen-dependent FAD-linked oxidoreductase family. FAD serves as cofactor.

Its pathway is pigment biosynthesis. In terms of biological role, FAD-linked oxidoreductase; part of the gene cluster that mediates the biosynthesis of the yellow pigment chrysogine. the NRPS chyA mediates the condensation of anthranilic acid and alanine into the intermediate 2-(2-aminopropanamido)benzoic acid. The remainder of the pathway is highly branched yielding at least 13 chrysogine-related compounds. The malonyl transferase chyE converts 2-(2-aminopropanamido)benzoic acid and 2-(2-aminopropanamido)benzamidine into 2-(2-(2-carboxyacetamido)propanamido)benzoic acid and 3-((1-((2-carbamoylphenyl)amino)-1-oxopropan-2-yl)amino)-3-oxopropanoic acid, respectively. ChyD is an amidase, being responsible for the amidation of the carboxylic acid moiety of 2-(2-aminopropanamido)benzoic acid, 2-(2-(2-carboxyacetamido)propanamido)benzoic acid and 2-(2-((4-amino-1-carboxy-4-oxobutyl)amino)propanamido)benzoic acid. ChyC is involved in the same reactions as ChyD, but plays a more minor role in the amidation reactions compared to chyD. The oxidoreductases chyH and chyM are involved in oxidation reactions that form N-pyruvoylanthranilamide from 2-(2-aminopropanamido)benzamidine and (1-((2-carbamoylphenyl)amino)-1-oxopropan-2-yl)glutamine, respectively. N-pyruvoylanthranilamide is further converted via two further branches in the pathway, yielding chrysogine and additional chrysogine-related coumpounds. Chrysogine is likely formed by a spontaneous ring closure from N-pyruvoylanthranilamide. This chain is FAD-linked oxidoreductase chyH, found in Penicillium rubens (strain ATCC 28089 / DSM 1075 / NRRL 1951 / Wisconsin 54-1255) (Penicillium chrysogenum).